Consider the following 348-residue polypeptide: Major outer membrane protein P.IB (348 aa).

The first 19 residues, 1–19 (MKKSLIALTLAALPVAAMA), serve as a signal peptide directing secretion.

It belongs to the Gram-negative porin family. In terms of assembly, homotrimer.

It is found in the cell outer membrane. Its function is as follows. Serves as a slightly cation selective porin. Major antigen on the gonococcal cell surface and it may have pathogenic properties in addition to its porin activity. In Neisseria gonorrhoeae, this protein is Major outer membrane protein P.IB (porB).